The chain runs to 415 residues: 3-isopropylmalate dehydratase large subunit (415 aa).

[4Fe-4S] cluster-binding residues include C295, C353, and C356.

Belongs to the aconitase/IPM isomerase family. LeuC type 2 subfamily. As to quaternary structure, heterodimer of LeuC and LeuD. [4Fe-4S] cluster is required as a cofactor.

It catalyses the reaction (2R,3S)-3-isopropylmalate = (2S)-2-isopropylmalate. It participates in amino-acid biosynthesis; L-leucine biosynthesis; L-leucine from 3-methyl-2-oxobutanoate: step 2/4. Its function is as follows. Catalyzes the isomerization between 2-isopropylmalate and 3-isopropylmalate, via the formation of 2-isopropylmaleate. The protein is 3-isopropylmalate dehydratase large subunit of Pyrobaculum aerophilum (strain ATCC 51768 / DSM 7523 / JCM 9630 / CIP 104966 / NBRC 100827 / IM2).